Reading from the N-terminus, the 317-residue chain is Nicotianamine synthase (317 aa).

It belongs to the nicotianamine synthase (NAS)-like family. As to quaternary structure, homomultimer. Leaves and roots.

The catalysed reaction is 3 S-adenosyl-L-methionine = nicotianamine + 3 S-methyl-5'-thioadenosine + 3 H(+). Functionally, synthesizes nicotianamine, a polyamine that serves as a sensor for the physiological iron status within the plant, and/or might be involved in the transport of iron. The chain is Nicotianamine synthase (CHLN) from Solanum lycopersicum (Tomato).